The sequence spans 151 residues: Methylglyoxal synthase (151 aa).

Positions 1–151 (MKKTTRTMAA…DYQAYLAERT (151 aa)) constitute an MGS-like domain. Substrate contacts are provided by residues His19, Lys23, 45 to 48 (TGTT), and 65 to 66 (SG). Asp71 (proton donor/acceptor) is an active-site residue. His98 serves as a coordination point for substrate.

This sequence belongs to the methylglyoxal synthase family.

The enzyme catalyses dihydroxyacetone phosphate = methylglyoxal + phosphate. In terms of biological role, catalyzes the formation of methylglyoxal from dihydroxyacetone phosphate. This chain is Methylglyoxal synthase, found in Vibrio cholerae serotype O1 (strain ATCC 39541 / Classical Ogawa 395 / O395).